The primary structure comprises 500 residues: MADKSEKTKARLPRGFADRSAEDIRAVEKMMATIRSVYELYGFEPADQPLIEYTDALGKFLPDQDRPNEGVFSFQDDDEQWLSLRYDLTAPTARFVAENYERLPKPYRSYRSGWVFRNEKPGPGRFRQFMQFDADTIGTPGVAADAEMAMMMADVMEALGIKRGDYVIRVNNRKVLDGVLEAIGLGGEENIGRRLTVLRAIDKLDKLGPEGVKLLLGPGRWDGGKEGEGDFAKGAGLNNGQAEAVLQATARNAQAAQDSVVDSNATYQEGVGELATIEALVRAAGYGEDRIAMDRSVVRGLEYYTGPVFEAELLAEIPNEDGQIVRFGSVGGGGRYDGLVSRFRGEPVPATGFSIGVSRLMTALKNLGKLDNADVIAPVVVLVMDKDTESLGRYQKMVSELRAAGIRSEMYLGGAGMKAQLKYADRRGCPVAIIQGGDERAKGELQIKDLIEGARMSAEITDNAEWRAARPAQVTVAESELVAEVKKILAAQAEERARGK.

The protein belongs to the class-II aminoacyl-tRNA synthetase family. Homodimer.

It is found in the cytoplasm. The catalysed reaction is tRNA(His) + L-histidine + ATP = L-histidyl-tRNA(His) + AMP + diphosphate + H(+). The chain is Histidine--tRNA ligase (hisS) from Mesorhizobium japonicum (strain LMG 29417 / CECT 9101 / MAFF 303099) (Mesorhizobium loti (strain MAFF 303099)).